Reading from the N-terminus, the 307-residue chain is UDP-N-acetylenolpyruvoylglucosamine reductase (307 aa).

One can recognise an FAD-binding PCMH-type domain in the interval arginine 34 to serine 199. Arginine 179 is a catalytic residue. Residue serine 228 is the Proton donor of the active site. The active site involves glutamate 298.

Belongs to the MurB family. It depends on FAD as a cofactor.

It localises to the cytoplasm. The catalysed reaction is UDP-N-acetyl-alpha-D-muramate + NADP(+) = UDP-N-acetyl-3-O-(1-carboxyvinyl)-alpha-D-glucosamine + NADPH + H(+). The protein operates within cell wall biogenesis; peptidoglycan biosynthesis. Its function is as follows. Cell wall formation. The chain is UDP-N-acetylenolpyruvoylglucosamine reductase from Bradyrhizobium sp. (strain ORS 278).